Here is a 418-residue protein sequence, read N- to C-terminus: NADH-quinone oxidoreductase subunit D (418 aa).

The protein belongs to the complex I 49 kDa subunit family. NDH-1 is composed of 14 different subunits. Subunits NuoB, C, D, E, F, and G constitute the peripheral sector of the complex.

The protein resides in the cell inner membrane. It catalyses the reaction a quinone + NADH + 5 H(+)(in) = a quinol + NAD(+) + 4 H(+)(out). Functionally, NDH-1 shuttles electrons from NADH, via FMN and iron-sulfur (Fe-S) centers, to quinones in the respiratory chain. The immediate electron acceptor for the enzyme in this species is believed to be ubiquinone. Couples the redox reaction to proton translocation (for every two electrons transferred, four hydrogen ions are translocated across the cytoplasmic membrane), and thus conserves the redox energy in a proton gradient. The chain is NADH-quinone oxidoreductase subunit D from Neisseria gonorrhoeae (strain ATCC 700825 / FA 1090).